The sequence spans 176 residues: Large ribosomal subunit protein uL6 (176 aa).

It belongs to the universal ribosomal protein uL6 family. As to quaternary structure, part of the 50S ribosomal subunit.

Functionally, this protein binds to the 23S rRNA, and is important in its secondary structure. It is located near the subunit interface in the base of the L7/L12 stalk, and near the tRNA binding site of the peptidyltransferase center. The sequence is that of Large ribosomal subunit protein uL6 from Methanosarcina mazei (strain ATCC BAA-159 / DSM 3647 / Goe1 / Go1 / JCM 11833 / OCM 88) (Methanosarcina frisia).